Reading from the N-terminus, the 145-residue chain is Large ribosomal subunit protein bL19 (145 aa).

Belongs to the bacterial ribosomal protein bL19 family.

In terms of biological role, this protein is located at the 30S-50S ribosomal subunit interface and may play a role in the structure and function of the aminoacyl-tRNA binding site. The polypeptide is Large ribosomal subunit protein bL19 (Brachyspira hyodysenteriae (strain ATCC 49526 / WA1)).